Consider the following 190-residue polypeptide: Somatotropin (190 aa).

His19 serves as a coordination point for Zn(2+). Cys52 and Cys163 are disulfide-bonded. The residue at position 105 (Ser105) is a Phosphoserine. Zn(2+) is bound at residue Glu172. A disulfide bond links Cys180 and Cys188.

It belongs to the somatotropin/prolactin family.

The protein resides in the secreted. In terms of biological role, plays an important role in growth control. Its major role in stimulating body growth is to stimulate the liver and other tissues to secrete IGF1. It stimulates both the differentiation and proliferation of myoblasts. It also stimulates amino acid uptake and protein synthesis in muscle and other tissues. The polypeptide is Somatotropin (GH1) (Balaenoptera borealis (Sei whale)).